A 948-amino-acid chain; its full sequence is Coatomer subunit beta-1 (948 aa).

HEAT repeat units lie at residues 49–87 (ETIPQLFITIIRYVLPSEDHTIQKLLLLYLELIEKTDSK), 92–126 (PEMILICQNLRNNLQHPNEYIRGVTLRFLCRMKET), 127–164 (EIVEPLTPSVLQNLEHRHPFVRRNAILAIMSIYKLPQG), 274–311 (TAIRAAANTYCQLLLSQSDNNVKLILLDRLYELKTLHR), 312–349 (DIMVELIIDVLRALSSPNLDIRRKTLDISLDLITHHNI), and 391–428 (EVASTVVHLLMDFLGDSNVASALDVVVFVREIIETNPK).

As to quaternary structure, oligomeric complex that consists of at least the alpha, beta, beta', gamma, delta, epsilon and zeta subunits.

Its subcellular location is the cytoplasm. It is found in the golgi apparatus membrane. The protein localises to the cytoplasmic vesicle. The protein resides in the COPI-coated vesicle membrane. In terms of biological role, the coatomer is a cytosolic protein complex that binds to dilysine motifs and reversibly associates with Golgi non-clathrin-coated vesicles, which further mediate biosynthetic protein transport from the ER, via the Golgi up to the trans Golgi network. Coatomer complex is required for budding from Golgi membranes, and is essential for the retrograde Golgi-to-ER transport of dilysine-tagged proteins. The sequence is that of Coatomer subunit beta-1 from Arabidopsis thaliana (Mouse-ear cress).